The following is a 541-amino-acid chain: 2-succinyl-5-enolpyruvyl-6-hydroxy-3-cyclohexene-1-carboxylate synthase (541 aa).

This sequence belongs to the TPP enzyme family. MenD subfamily. In terms of assembly, homodimer. The cofactor is Mg(2+). Mn(2+) is required as a cofactor. Thiamine diphosphate serves as cofactor.

The enzyme catalyses isochorismate + 2-oxoglutarate + H(+) = 5-enolpyruvoyl-6-hydroxy-2-succinyl-cyclohex-3-ene-1-carboxylate + CO2. The protein operates within quinol/quinone metabolism; 1,4-dihydroxy-2-naphthoate biosynthesis; 1,4-dihydroxy-2-naphthoate from chorismate: step 2/7. It functions in the pathway quinol/quinone metabolism; menaquinone biosynthesis. In terms of biological role, catalyzes the thiamine diphosphate-dependent decarboxylation of 2-oxoglutarate and the subsequent addition of the resulting succinic semialdehyde-thiamine pyrophosphate anion to isochorismate to yield 2-succinyl-5-enolpyruvyl-6-hydroxy-3-cyclohexene-1-carboxylate (SEPHCHC). In Leuconostoc citreum (strain KM20), this protein is 2-succinyl-5-enolpyruvyl-6-hydroxy-3-cyclohexene-1-carboxylate synthase.